We begin with the raw amino-acid sequence, 252 residues long: Phosphoglycolate phosphatase (252 aa).

Residue Asp-13 is the Nucleophile of the active site. Mg(2+)-binding residues include Asp-13, Asp-15, and Asp-192.

The protein belongs to the HAD-like hydrolase superfamily. CbbY/CbbZ/Gph/YieH family. In terms of assembly, monomer. Requires Mg(2+) as cofactor. It depends on chloride as a cofactor.

It carries out the reaction 2-phosphoglycolate + H2O = glycolate + phosphate. The protein operates within organic acid metabolism; glycolate biosynthesis; glycolate from 2-phosphoglycolate: step 1/1. In terms of biological role, specifically catalyzes the dephosphorylation of 2-phosphoglycolate. Is involved in the dissimilation of the intracellular 2-phosphoglycolate formed during the DNA repair of 3'-phosphoglycolate ends, a major class of DNA lesions induced by oxidative stress. This chain is Phosphoglycolate phosphatase, found in Shigella sonnei (strain Ss046).